We begin with the raw amino-acid sequence, 557 residues long: CTP synthase (557 aa).

The segment at 1–270 (MTKYVFVTGG…DAIICEELKL (270 aa)) is amidoligase domain. Ser13 serves as a coordination point for CTP. Position 13 (Ser13) interacts with UTP. ATP-binding positions include 14–19 (SLGKGI) and Asp71. Mg(2+)-binding residues include Asp71 and Glu144. CTP-binding positions include 151–153 (DIE), 191–196 (KTKPTQ), and Lys227. UTP is bound by residues 191–196 (KTKPTQ) and Lys227. In terms of domain architecture, Glutamine amidotransferase type-1 spans 295-547 (TIGMVGKYVD…VEAALAHHEA (253 aa)). Gly356 serves as a coordination point for L-glutamine. The Nucleophile; for glutamine hydrolysis role is filled by Cys383. L-glutamine is bound by residues 384–387 (LGMQ), Glu407, and Arg473. Residues His520 and Glu522 contribute to the active site.

This sequence belongs to the CTP synthase family. As to quaternary structure, homotetramer.

The enzyme catalyses UTP + L-glutamine + ATP + H2O = CTP + L-glutamate + ADP + phosphate + 2 H(+). It carries out the reaction L-glutamine + H2O = L-glutamate + NH4(+). The catalysed reaction is UTP + NH4(+) + ATP = CTP + ADP + phosphate + 2 H(+). Its pathway is pyrimidine metabolism; CTP biosynthesis via de novo pathway; CTP from UDP: step 2/2. Its activity is regulated as follows. Allosterically activated by GTP, when glutamine is the substrate; GTP has no effect on the reaction when ammonia is the substrate. The allosteric effector GTP functions by stabilizing the protein conformation that binds the tetrahedral intermediate(s) formed during glutamine hydrolysis. Inhibited by the product CTP, via allosteric rather than competitive inhibition. Catalyzes the ATP-dependent amination of UTP to CTP with either L-glutamine or ammonia as the source of nitrogen. Regulates intracellular CTP levels through interactions with the four ribonucleotide triphosphates. The protein is CTP synthase of Paraburkholderia phytofirmans (strain DSM 17436 / LMG 22146 / PsJN) (Burkholderia phytofirmans).